The chain runs to 542 residues: MAAKEVKFQTDARERMLRGVDVLANAVKVTLGPKGRNVVIDKSFGAPRITKDGVSVAKEIELEDKFENMGAQMLREVASRTNDLAGDGTTTATVLAQAIVREGAKAVASGMNPMDLKRGIDLAVDAVVKELKNNARKISKNSEIAQVGTISANGDTEIGRYLAEAMEKVGNEGVITVEEAKTAETELEVVEGMQFDRGYLSPYFITNQDKMRVELEDPYILIHEKKLSNLQAMLPVLEAVVQSGKPLLIIAEDVEGEALATLVVNKLRGGLKVAAVKAPGFGDRRKAMLEDIAILTGGTVVSEDLGIKLESVTLDMLGRAKKVSIEKENTTIIDGAGSKADIEGRTAQIRAQIEETTSDYDREKLQERLAKLAGGVAVIRVGGSTEVEVKEKKDRVDDALHATRAAVEEGILPGGGVALLRAVKALDGLKTANNDQRVGVDLVRRAIEAPVRQIAENAGAEGSIIVGKLREKTEFSYGWNAQTNEYGDLYAMGVIDPAKVVRTALQDAASVAGLLVTTEAMIAEKPKKEAAPALPAGGGMDF.

ATP-binding positions include 30–33 (TLGP), Lys51, 87–91 (DGTTT), Gly415, and Asp496.

The protein belongs to the chaperonin (HSP60) family. As to quaternary structure, forms a cylinder of 14 subunits composed of two heptameric rings stacked back-to-back. Interacts with the co-chaperonin GroES.

Its subcellular location is the cytoplasm. It carries out the reaction ATP + H2O + a folded polypeptide = ADP + phosphate + an unfolded polypeptide.. Its function is as follows. Together with its co-chaperonin GroES, plays an essential role in assisting protein folding. The GroEL-GroES system forms a nano-cage that allows encapsulation of the non-native substrate proteins and provides a physical environment optimized to promote and accelerate protein folding. This chain is Chaperonin GroEL 5, found in Rhizobium meliloti (strain 1021) (Ensifer meliloti).